A 330-amino-acid chain; its full sequence is Delta-aminolevulinic acid dehydratase (330 aa).

Lys-203 (schiff-base intermediate with substrate) is an active-site residue. 5-aminolevulinate is bound by residues Arg-213 and Arg-224. Glu-240 is a binding site for Mg(2+). Lys-255 serves as the catalytic Schiff-base intermediate with substrate. 5-aminolevulinate contacts are provided by Ser-281 and Tyr-320.

Belongs to the ALAD family. In terms of assembly, homooctamer.

It carries out the reaction 2 5-aminolevulinate = porphobilinogen + 2 H2O + H(+). It participates in porphyrin-containing compound metabolism; protoporphyrin-IX biosynthesis; coproporphyrinogen-III from 5-aminolevulinate: step 1/4. Functionally, catalyzes an early step in the biosynthesis of tetrapyrroles. Binds two molecules of 5-aminolevulinate per subunit, each at a distinct site, and catalyzes their condensation to form porphobilinogen. This is Delta-aminolevulinic acid dehydratase (hemB) from Streptomyces coelicolor (strain ATCC BAA-471 / A3(2) / M145).